The following is a 498-amino-acid chain: Glycerol kinase (498 aa).

Residue Thr-11 coordinates ADP. ATP contacts are provided by Thr-11, Thr-12, and Ser-13. Thr-11 contacts sn-glycerol 3-phosphate. Arg-15 contributes to the ADP binding site. 4 residues coordinate sn-glycerol 3-phosphate: Arg-81, Glu-82, Tyr-133, and Asp-242. Glycerol contacts are provided by Arg-81, Glu-82, Tyr-133, Asp-242, and Gln-243. ADP is bound by residues Thr-264 and Gly-307. ATP-binding residues include Thr-264, Gly-307, Gln-311, and Gly-411. Residue Gly-411 coordinates ADP.

It belongs to the FGGY kinase family.

It catalyses the reaction glycerol + ATP = sn-glycerol 3-phosphate + ADP + H(+). It participates in polyol metabolism; glycerol degradation via glycerol kinase pathway; sn-glycerol 3-phosphate from glycerol: step 1/1. Its activity is regulated as follows. Inhibited by fructose 1,6-bisphosphate (FBP). Key enzyme in the regulation of glycerol uptake and metabolism. Catalyzes the phosphorylation of glycerol to yield sn-glycerol 3-phosphate. In Afipia carboxidovorans (strain ATCC 49405 / DSM 1227 / KCTC 32145 / OM5) (Oligotropha carboxidovorans), this protein is Glycerol kinase.